The chain runs to 374 residues: Cysteine-type anaerobic sulfatase-maturating enzyme (374 aa).

The Radical SAM core domain occupies 1–227 (MKSLSMLIKP…LNKLFDLWFK (227 aa)). [4Fe-4S] cluster contacts are provided by Cys-15 and Cys-19. S-adenosyl-L-methionine is bound at residue Tyr-21. Residue Cys-22 participates in [4Fe-4S] cluster binding. S-adenosyl-L-methionine contacts are provided by Gly-66, Ser-122, Arg-134, and Leu-195. [4Fe-4S] cluster-binding residues include Cys-255, Cys-261, and Cys-276. Catalysis depends on Asp-277, which acts as the Proton acceptor. [4Fe-4S] cluster is bound by residues Cys-317, Cys-320, Cys-326, Cys-330, and Cys-348.

Belongs to the radical SAM superfamily. Anaerobic sulfatase-maturating enzyme family. It depends on [4Fe-4S] cluster as a cofactor.

It catalyses the reaction L-cysteinyl-[sulfatase] + S-adenosyl-L-methionine + H2O = 3-oxo-L-alanyl-[sulfatase] + hydrogen sulfide + 5'-deoxyadenosine + L-methionine + 2 H(+). It functions in the pathway protein modification; sulfatase oxidation. Involved in 'Cys-type' sulfatase maturation under anaerobic conditions. Catalyzes the post-translational modification of cysteine into 3-oxoalanine (also known as C(alpha)-formylglycine (FGly)), by a free radical chemical mechanism initiated via the reductive cleavage of S-adenosyl-L-methionine (SAM). In Clostridium novyi (strain NT), this protein is Cysteine-type anaerobic sulfatase-maturating enzyme.